An 86-amino-acid polypeptide reads, in one-letter code: Protein U17 (86 aa).

The polypeptide is Protein U17 (U17/U16) (Homo sapiens (Human)).